Consider the following 3660-residue polypeptide: Dystrophin (3660 aa).

The tract at residues 1 to 244 (MSAHVLWYEE…YVTSLFQVLP (244 aa)) is actin-binding. Calponin-homology (CH) domains are found at residues 19-123 (DVQK…LHWQ) and 138-244 (TNSE…QVLP). 22 Spectrin repeats span residues 341 to 449 (MDLD…NLHK), 450 to 558 (ILMD…LLQD), 561 to 669 (RKWQ…QVSQ), 721 to 830 (EIRK…WLEY), 832 to 936 (NSII…QLQT), 945 to 1047 (RYKD…KLED), 1050 to 1156 (TKLQ…ALKG), 1159 to 1265 (DKTV…TLEE), 1268 to 1369 (ACWH…SLEQ), 1470 to 1570 (EQRL…ELEK), 1573 to 1678 (KLSR…LLME), 1681 to 1782 (KHME…FIPL), 1879 to 1981 (HQWY…TVLE), 2013 to 2103 (LSEV…RFDK), 2106 to 2211 (EKWR…RIEE), 2214 to 2321 (NILS…EIEI), 2472 to 2574 (FNKA…QLHE), 2577 to 2683 (KDST…ALES), 2686 to 2799 (LMLQ…HLEA), 2802 to 2904 (DQWK…LRRQ), 2906 to 2928 (DDVR…KIDD), and 2931 to 3037 (ERLQ…QLHE). The 34-residue stretch at 3052–3085 (TSVQGPWERAISPNKVPYYINHETQTTCWDHPKM) folds into the WW domain. Residues 3305–3361 (KHQAKCNICKECPIIGFRYRSLKHFNYDICQSCFFSGRVAKGHKMHYPMVEYCTPTT) form a ZZ-type; degenerate zinc finger. Cys-3310, Cys-3313, Cys-3334, and Cys-3337 together coordinate Zn(2+). 2 disordered regions span residues 3503–3526 (KQQH…VSPQ) and 3575–3660 (PQAD…EATM). Composition is skewed to polar residues over residues 3582–3601 (NGTT…SSQP) and 3637–3647 (QLNNSFPSSRG).

The protein localises to the cell membrane. Its subcellular location is the sarcolemma. The protein resides in the cytoplasm. It is found in the cytoskeleton. It localises to the postsynaptic cell membrane. In terms of biological role, may play a role in anchoring the cytoskeleton to the plasma membrane. This is Dystrophin (DMD) from Gallus gallus (Chicken).